Consider the following 410-residue polypeptide: Histidine--tRNA ligase (410 aa).

This sequence belongs to the class-II aminoacyl-tRNA synthetase family.

The protein localises to the cytoplasm. The enzyme catalyses tRNA(His) + L-histidine + ATP = L-histidyl-tRNA(His) + AMP + diphosphate + H(+). This is Histidine--tRNA ligase from Methanoregula boonei (strain DSM 21154 / JCM 14090 / 6A8).